Here is a 531-residue protein sequence, read N- to C-terminus: Beta-hexosaminidase subunit beta (531 aa).

A signal peptide spans 1 to 24; sequence MRHRGLGLAALLALLAAVAPRSSA. An N-linked (GlcNAc...) asparagine glycan is attached at N50. C65 and C111 are disulfide-bonded. N-linked (GlcNAc...) asparagine glycosylation is found at N116, N164, and N301. Intrachain disulfides connect C283–C334 and C508–C525. The active-site Proton donor is E329.

The protein belongs to the glycosyl hydrolase 20 family. There are 3 forms of beta-hexosaminidase: hexosaminidase A is a heterodimer composed of one subunit alpha and one subunit beta (chain A and B); hexosaminidase B is a homodimer of two beta subunits (two chains A and B); hexosaminidase S is a homodimer of two alpha subunits. The composition of the dimer (isozyme A versus isozyme S) has a significant effect on the substrate specificity of the alpha subunit active site.

It localises to the lysosome. It is found in the cytoplasmic vesicle. The protein resides in the secretory vesicle. Its subcellular location is the cortical granule. It catalyses the reaction Hydrolysis of terminal non-reducing N-acetyl-D-hexosamine residues in N-acetyl-beta-D-hexosaminides.. The enzyme catalyses N-acetyl-beta-D-galactosaminyl-(1-&gt;4)-beta-D-3-sulfogalactosyl-(1-&gt;4)-beta-D-glucosyl-(1&lt;-&gt;1')-ceramide + H2O = a beta-D-3-sulfogalactosyl-(1-&gt;4)-beta-D-glucosyl-(1&lt;-&gt;1')-ceramide + N-acetyl-beta-D-galactosamine. The catalysed reaction is a ganglioside GM2 (d18:1(4E)) + H2O = a ganglioside GM3 (d18:1(4E)) + N-acetyl-beta-D-galactosamine. It carries out the reaction a ganglioside GM2 + H2O = a ganglioside GM3 + N-acetyl-beta-D-galactosamine. It catalyses the reaction beta-D-GalNAc-(1-&gt;4)-alpha-L-IdoA-(1-&gt;3)-beta-D-GalNAc-4-sulfate-(1-&gt;4)-alpha-L-IdoA-(1-&gt;3)-D-GalNAc-4-sulfate + H2O = alpha-L-IdoA-(1-&gt;3)-beta-D-GalNAc-4-sulfate-(1-&gt;4)-alpha-L-IdoA-(1-&gt;3)-D-GalNAc-4-sulfate + N-acetyl-D-galactosamine. The enzyme catalyses N-acetyl-beta-D-6-sulfogalactosaminyl-(1-&gt;4)-alpha-L-iduronyl-(1-&gt;3)-N-acetyl-D-6-sulfogalactosamine + H2O = alpha-L-iduronyl-(1-&gt;3)-N-acetyl-D-6-sulfogalactosamine + N-acetyl-D-6-sulfogalactosamine. Its activity is regulated as follows. Addition of GM2A stimulates the hydrolysis of sulfated glycosphingolipid SM2 and the ganglioside GM2. In terms of biological role, hydrolyzes the non-reducing end N-acetyl-D-hexosamine and/or sulfated N-acetyl-D-hexosamine of glycoconjugates, such as the oligosaccharide moieties from proteins and neutral glycolipids, or from certain mucopolysaccharides. The isozyme B does not hydrolyze each of these substrates, however hydrolyzes efficiently neutral oligosaccharide. Only the isozyme A is responsible for the degradation of GM2 gangliosides in the presence of GM2A. During fertilization is responsible, at least in part, for the zona block to polyspermy. Present in the cortical granules of non-activated oocytes, is exocytosed during the cortical reaction in response to oocyte activation and inactivates the sperm galactosyltransferase-binding site, accounting for the block in sperm binding to the zona pellucida. The chain is Beta-hexosaminidase subunit beta from Felis catus (Cat).